The chain runs to 456 residues: Probable glycine dehydrogenase (decarboxylating) subunit 1 (456 aa).

Belongs to the GcvP family. N-terminal subunit subfamily. In terms of assembly, the glycine cleavage system is composed of four proteins: P, T, L and H. In this organism, the P 'protein' is a heterodimer of two subunits.

It catalyses the reaction N(6)-[(R)-lipoyl]-L-lysyl-[glycine-cleavage complex H protein] + glycine + H(+) = N(6)-[(R)-S(8)-aminomethyldihydrolipoyl]-L-lysyl-[glycine-cleavage complex H protein] + CO2. Its function is as follows. The glycine cleavage system catalyzes the degradation of glycine. The P protein binds the alpha-amino group of glycine through its pyridoxal phosphate cofactor; CO(2) is released and the remaining methylamine moiety is then transferred to the lipoamide cofactor of the H protein. This is Probable glycine dehydrogenase (decarboxylating) subunit 1 from Legionella pneumophila (strain Corby).